The primary structure comprises 178 residues: ATP synthase subunit d, mitochondrial (178 aa).

Residues 149–178 form a disordered region; that stretch reads NKPTFWPHTPEEQVGYKSKEQLEAEAQGHH. Basic and acidic residues predominate over residues 165 to 178; the sequence is KSKEQLEAEAQGHH.

This sequence belongs to the ATPase d subunit family. As to quaternary structure, F-type ATPases have 2 components, CF(1) - the catalytic core - and CF(0) - the membrane proton channel. CF(0) seems to have nine subunits: a, b, c, d, e, f, g, F6 and 8 (or A6L).

The protein resides in the mitochondrion. It localises to the mitochondrion inner membrane. Mitochondrial membrane ATP synthase (F(1)F(0) ATP synthase or Complex V) produces ATP from ADP in the presence of a proton gradient across the membrane which is generated by electron transport complexes of the respiratory chain. F-type ATPases consist of two structural domains, F(1) - containing the extramembraneous catalytic core, and F(0) - containing the membrane proton channel, linked together by a central stalk and a peripheral stalk. During catalysis, ATP synthesis in the catalytic domain of F(1) is coupled via a rotary mechanism of the central stalk subunits to proton translocation. Part of the complex F(0) domain and the peripheric stalk, which acts as a stator to hold the catalytic alpha(3)beta(3) subcomplex and subunit a/ATP6 static relative to the rotary elements. This Drosophila melanogaster (Fruit fly) protein is ATP synthase subunit d, mitochondrial.